The primary structure comprises 503 residues: Plant-specific TFIIB-related protein 1 (503 aa).

A TFIIB-type zinc finger spans residues 1-33 (MKCPYCSSAQGRCTTTSSGRSITECSSCGRVME). Disordered stretches follow at residues 328–366 (PEKA…AKPI), 411–431 (NAMD…LGDK), 436–455 (IYLR…TGIS), and 468–503 (GSSS…HGDF). The span at 333–346 (PTTTISTTRSTTPR) shows a compositional bias: low complexity. Basic and acidic residues predominate over residues 355–366 (FVEKDKPSAKPI).

Ubiquinated. Subsequent degradation by the proteasome pathway. Widely expressed.

It localises to the plastid. It is found in the chloroplast outer membrane. Its subcellular location is the nucleus. Plant-specific TFIIB-related protein that may be involved in an intracellular signaling pathway between plastids and the nucleus. May act as general transcription factor (GTF) of RNA polymerase I-dependent transcription and rRNA synthesis. Forms a ternary complex with TBP2 and the rDNA promoter region. The polypeptide is Plant-specific TFIIB-related protein 1 (Arabidopsis thaliana (Mouse-ear cress)).